The sequence spans 155 residues: Fibroblast growth factor 1 (155 aa).

N-acetylalanine is present on Ala-2. The short motif at Lys-24–Lys-27 is the Nuclear localization signal element. Heparin-binding positions include Lys-24 to Leu-28 and Ile-113 to Lys-116.

Belongs to the heparin-binding growth factors family. As to quaternary structure, monomer. Homodimer. Interacts with FGFR1, FGFR2, FGFR3 and FGFR4. Affinity between fibroblast growth factors (FGFs) and their receptors is increased by heparan sulfate glycosaminoglycans that function as coreceptors. Found in a complex with FGFBP1, FGF1 and FGF2. Interacts with FGFBP1. Part of a Cu(2+)-dependent multiprotein aggregate containing FGF1, S100A13 and SYT1. Interacts with S100A13. Interacts with FGFBP1. Interacts with LRRC59. Interacts with CSNKA, CSNKB and FIBP. While binding with LRRC59, CSNKA and FIBP seem mutually exclusive, CSNKB and FIBP may cooperatively interact with FGF1. Interacts with SYT1. Forms a ternary complex with FGFR1 and ITGAV:ITGB3 and induces the recruitment of PTPN11 to the complex. In the nucleus, phosphorylated by PKC/PRKCD.

Its subcellular location is the secreted. The protein resides in the cytoplasm. The protein localises to the cell cortex. It is found in the cytosol. It localises to the nucleus. Plays an important role in the regulation of cell survival, cell division, angiogenesis, cell differentiation and cell migration. Functions as a potent mitogen in vitro. Acts as a ligand for FGFR1 and integrins. Binds to FGFR1 in the presence of heparin leading to FGFR1 dimerization and activation via sequential autophosphorylation on tyrosine residues which act as docking sites for interacting proteins, leading to the activation of several signaling cascades. Binds to integrin ITGAV:ITGB3. Its binding to integrin, subsequent ternary complex formation with integrin and FGFR1, and the recruitment of PTPN11 to the complex are essential for FGF1 signaling. Induces the phosphorylation and activation of FGFR1, FRS2, MAPK3/ERK1, MAPK1/ERK2 and AKT1. Can induce angiogenesis. The chain is Fibroblast growth factor 1 (FGF1) from Bos taurus (Bovine).